A 322-amino-acid polypeptide reads, in one-letter code: D-specific alpha-keto acid dehydrogenase (322 aa).

NAD(+) contacts are provided by residues 156 to 157 (QI), 229 to 231 (TGR), and D255. Residue R231 is part of the active site. E260 is an active-site residue. The Proton donor role is filled by H292. 292–295 (HTAY) contributes to the NAD(+) binding site.

It belongs to the D-isomer specific 2-hydroxyacid dehydrogenase family.

The catalysed reaction is a (2R)-2-hydroxycarboxylate + NADP(+) = a 2-oxocarboxylate + NADPH + H(+). The enzyme catalyses a (2R)-2-hydroxycarboxylate + NAD(+) = a 2-oxocarboxylate + NADH + H(+). It catalyses the reaction (R)-lactate + NADP(+) = pyruvate + NADPH + H(+). It carries out the reaction (R)-lactate + NAD(+) = pyruvate + NADH + H(+). The catalysed reaction is (2R)-hydroxybutanoate + NADP(+) = 2-oxobutanoate + NADPH + H(+). Functionally, required for high-level resistance to glycopeptide antibiotics. Catalyzes the reduction of 2-keto acids to 2-D-hydroxy acids, exhibiting highest catalytic efficiency with pyruvate and 2-oxobutanoate/alpha-ketobutyrate as substrates, producing D-lactate and (2R)-hydroxybutanoate, respectively. Together with D-alanine--D-lactate ligase VanA, gives rise to peptidoglycan precursors that terminate in the depsipeptide D-alanine-D-lactate rather than the dipeptide D-alanine-D-alanine thus preventing vancomycin binding. Shows a slight preference for NADPH over NADH as the electron donor. In Enterococcus faecium (Streptococcus faecium), this protein is D-specific alpha-keto acid dehydrogenase.